The sequence spans 309 residues: Porphobilinogen deaminase (309 aa).

At cysteine 242 the chain carries S-(dipyrrolylmethanemethyl)cysteine.

It belongs to the HMBS family. In terms of assembly, monomer. Dipyrromethane serves as cofactor.

It catalyses the reaction 4 porphobilinogen + H2O = hydroxymethylbilane + 4 NH4(+). It functions in the pathway porphyrin-containing compound metabolism; protoporphyrin-IX biosynthesis; coproporphyrinogen-III from 5-aminolevulinate: step 2/4. In terms of biological role, tetrapolymerization of the monopyrrole PBG into the hydroxymethylbilane pre-uroporphyrinogen in several discrete steps. This Pseudoalteromonas atlantica (strain T6c / ATCC BAA-1087) protein is Porphobilinogen deaminase.